The following is a 129-amino-acid chain: Small ribosomal subunit protein uS9 (129 aa).

This sequence belongs to the universal ribosomal protein uS9 family.

The protein is Small ribosomal subunit protein uS9 of Aliarcobacter butzleri (strain RM4018) (Arcobacter butzleri).